We begin with the raw amino-acid sequence, 413 residues long: Precorrin-6Y C(5,15)-methyltransferase [decarboxylating] (413 aa).

Belongs to the precorrin methyltransferase family.

The enzyme catalyses precorrin-6B + 2 S-adenosyl-L-methionine = precorrin-8X + 2 S-adenosyl-L-homocysteine + CO2 + 3 H(+). Its pathway is cofactor biosynthesis; adenosylcobalamin biosynthesis; cob(II)yrinate a,c-diamide from precorrin-2 (aerobic route): step 7/10. Catalyzes the methylation of both C-5 and C-15 in precorrin-6Y to form precorrin-8X. The polypeptide is Precorrin-6Y C(5,15)-methyltransferase [decarboxylating] (cobL) (Sinorhizobium sp).